Reading from the N-terminus, the 334-residue chain is Cathepsin R (334 aa).

The signal sequence occupies residues 1 to 17; it reads MAAVVFIAFLYLGVASG. Residues 18 to 114 constitute a propeptide, activation peptide; that stretch reads VPVLDSSLDA…SIMKREAGSI (97 aa). 2 disulfides stabilise this stretch: Cys136/Cys179 and Cys170/Cys212. Cys139 is an active-site residue. Asn269 is a glycosylation site (N-linked (GlcNAc...) asparagine). Cys270 and Cys323 are disulfide-bonded. Residues His277 and Asn301 contribute to the active site.

This sequence belongs to the peptidase C1 family. Placenta.

It localises to the lysosome. The chain is Cathepsin R (Ctsr) from Mus musculus (Mouse).